A 294-amino-acid polypeptide reads, in one-letter code: tRNA-cytidine(32) 2-sulfurtransferase (294 aa).

A PP-loop motif motif is present at residues 70 to 75 (SGGKDS). 3 residues coordinate [4Fe-4S] cluster: Cys-145, Cys-148, and Cys-236.

This sequence belongs to the TtcA family. As to quaternary structure, homodimer. Requires Mg(2+) as cofactor. [4Fe-4S] cluster serves as cofactor.

It localises to the cytoplasm. It catalyses the reaction cytidine(32) in tRNA + S-sulfanyl-L-cysteinyl-[cysteine desulfurase] + AH2 + ATP = 2-thiocytidine(32) in tRNA + L-cysteinyl-[cysteine desulfurase] + A + AMP + diphosphate + H(+). The protein operates within tRNA modification. Catalyzes the ATP-dependent 2-thiolation of cytidine in position 32 of tRNA, to form 2-thiocytidine (s(2)C32). The sulfur atoms are provided by the cysteine/cysteine desulfurase (IscS) system. This is tRNA-cytidine(32) 2-sulfurtransferase from Rhizobium meliloti (strain 1021) (Ensifer meliloti).